Here is a 170-residue protein sequence, read N- to C-terminus: Copper transporter 1 (170 aa).

A disordered region spans residues 1–29; that stretch reads MDHDHMHGMPRPSSSSSSSPSSMMNNGSM. Residues 9 to 29 are compositionally biased toward low complexity; that stretch reads MPRPSSSSSSSPSSMMNNGSM. The next 2 membrane-spanning stretches (helical) occupy residues 65 to 85 and 114 to 134; these read GMYA…EWLA and IGLA…VFLV.

The protein belongs to the copper transporter (Ctr) (TC 1.A.56) family. SLC31A subfamily. As to expression, expressed in the root apex, lateral root primordia, embryo, trichomes, guard cells and pollen grains.

It is found in the membrane. In terms of biological role, copper transporter involved in copper acquisition and transport in leaves. Required for copper homeostasis and normal plant growth and development. This Arabidopsis thaliana (Mouse-ear cress) protein is Copper transporter 1 (COPT1).